A 615-amino-acid chain; its full sequence is Neurosecretory protein VGF (615 aa).

Positions 1-22 (MKALRLSASALFCLLLINGLGA) are cleaved as a signal peptide. Disordered regions lie at residues 22 to 201 (AAPP…ESPG) and 218 to 257 (PERA…PKTH). Pro residues-rich tracts occupy residues 25–35 (PGRPEAQPPPL) and 129–141 (PESP…PRPQ). Residues 179 to 194 (ETAAAETETRTHTLTR) show a composition bias toward low complexity. Position 310 is a pyrrolidone carboxylic acid (Gln-310). The segment at 342-600 (RQRGLGGRGL…EAEERRLQEQ (259 aa)) is disordered. Residues 378-394 (VGEEDEEAAEAEAEAEE) show a composition bias toward acidic residues. Basic and acidic residues predominate over residues 415-433 (AEDKRSQEETPGHRRKEAE). Residue Ser-420 is modified to Phosphoserine; by FAM20C. Thr-424 is subject to Phosphothreonine; by FAM20C. Residues 434 to 448 (GTEEGGEEEDDEEMD) are compositionally biased toward acidic residues. The span at 487–497 (PPEPVPPPRAA) shows a compositional bias: pro residues. Pro-577 carries the proline amide modification. The segment covering 577 to 599 (PGREAQARRAQEEAEAEERRLQE) has biased composition (basic and acidic residues).

In terms of assembly, interacts with HSPA8 on cell membrane. Interacts with C3AR1. Interacts with C1QBP. In terms of processing, multiple peptides are derived from VGF, with activities in synaptic plasticity, antidepression, penile erection, autonomic activation, and increases in energy expenditure. In terms of tissue distribution, central and peripheral nervous systems, synthesized exclusively in neuronal and neuroendocrine cells.

Its subcellular location is the secreted. It localises to the cytoplasmic vesicle. The protein localises to the secretory vesicle. In terms of biological role, secreted polyprotein that is packaged and proteolytically processed by prohormone convertases PCSK1 and PCSK2 in a cell-type-specific manner. VGF and peptides derived from its processing play many roles in neurogenesis and neuroplasticity associated with learning, memory, depression and chronic pain. Its function is as follows. Plays a role in the control of body fluid homeostasis by regulating vasopressin release. Suppresses presynaptic glutamatergic neurons connected to vasopressin neurons. Plays a role in the control of body fluid homeostasis by regulating vasopressin release. Activates GABAergic interneurons which are inhibitory neurons of the nervous system and thereby suppresses presynaptic glutamatergic neurons. Also stimulates feeding behavior in an orexin-dependent manner in the hypothalamus. Functions as a positive regulator for the activation of orexin neurons resulting in elevated gastric acid secretion and gastric emptying. Functionally, secreted multifunctional neuropeptide that binds to different cell receptors and thereby plays multiple physiological roles including modulation of energy expenditure, pain, response to stress, gastric regulation, glucose homeostasis as well as lipolysis. Activates the G-protein-coupled receptor C3AR1 via a folding-upon-binding mechanism leading to enhanced lipolysis in adipocytes. Interacts with C1QBP receptor in macrophages and microglia causing increased levels of intracellular calcium and hypersensitivity. In terms of biological role, plays a role in the regulation of memory formation and depression-related behaviors potentially by influencing synaptic plasticity and neurogenesis. Induces acute and transient activation of the NTRK2/TRKB receptor and subsequent CREB phosphorylation. Also induces insulin secretion in insulinoma cells by increasing intracellular calcium mobilization. Its function is as follows. Has bactericidal activity against M.luteus, and antifungal activity against P. Pastoris. In Homo sapiens (Human), this protein is Neurosecretory protein VGF (VGF).